The following is a 67-amino-acid chain: Large ribosomal subunit protein bL35 (67 aa).

It belongs to the bacterial ribosomal protein bL35 family.

The protein is Large ribosomal subunit protein bL35 of Gloeothece citriformis (strain PCC 7424) (Cyanothece sp. (strain PCC 7424)).